We begin with the raw amino-acid sequence, 1051 residues long: Serine/threonine-protein kinase ULK1 (1051 aa).

The 263-residue stretch at 16–278 folds into the Protein kinase domain; it reads FSRKDLIGHG…FDEFFHHPFL (263 aa). ATP-binding positions include 22–30 and lysine 46; that span reads IGHGAFAVV. Aspartate 138 (proton acceptor) is an active-site residue. Residue lysine 162 is modified to N6-acetyllysine. Disordered regions lie at residues 283–323, 335–358, and 394–554; these read PIKK…EMPQ, AGFL…DDFV, and GLES…CRLH. The interaction with GABARAP and GABARAPL2 stretch occupies residues 287–416; that stretch reads SPPVPVPSYP…TCSSSPSPSG (130 aa). Composition is skewed to low complexity over residues 295–318, 340–349, and 400–423; these read YPSS…PPSL, GSRDSGGSSK, and RTPS…PFSS. Serine 317 bears the Phosphoserine; by AMPK mark. Residues serine 403 and serine 450 each carry the phosphoserine modification. Residues 437–459 are compositionally biased toward polar residues; sequence QVHNYQRIEQNLQSPTQQQTARS. At threonine 456 the chain carries Phosphothreonine. Phosphoserine is present on residues serine 467, serine 477, serine 479, and serine 521. Serine 555 is subject to Phosphoserine; by AMPK. Threonine 574 is modified (phosphothreonine). The residue at position 606 (lysine 606) is an N6-acetyllysine. Threonine 635 carries the post-translational modification Phosphothreonine. Serine 637 carries the phosphoserine; by AMPK modification. Serine 638 is subject to Phosphoserine. 2 disordered regions span residues 661-686 and 727-787; these read PDLS…DTRG and APSA…TGSS. The span at 731-745 shows a compositional bias: gly residues; the sequence is GFGGTLHPGARGGGA. Residue serine 757 is modified to Phosphoserine; by MTOR. Serine 774 is subject to Phosphoserine. Low complexity predominate over residues 774–787; that stretch reads SVGSSSSLGSTGSS. The residue at position 777 (serine 777) is a Phosphoserine; by AMPK. Residues 829–1051 form a C-terminal domain; mediates interaction with SESN2 region; it reads PDLPEETLME…LSALLSGVYA (223 aa).

This sequence belongs to the protein kinase superfamily. Ser/Thr protein kinase family. APG1/unc-51/ULK1 subfamily. As to quaternary structure, interacts with GABARAP and GABARAPL2. Interacts (via C-terminus) with ATG13. Part of a complex consisting of ATG13, ATG101, ULK1 and RB1CC1. Associates with the mammalian target of rapamycin complex 1 (mTORC1) through an interaction with RPTOR; the association depends on nutrient conditions and is reduced during starvation. Interacts with FEZ1; SCOC interferes with FEZ1-binding. Interacts with TBC1D14. Interacts (phosphorylated form) with TRIM5. When phosphorylated at Ser-317, interacts with MEFV and BECN1 simultaneously. Interacts with TRIM21 and IRF3, in the presence of TRIM21. Interacts with SESN2. Interacts with SQSTM1. Interacts with C9orf72. Interacts with WDR45. Interacts with ATG13; this interaction is increased in the absence of TMEM39A. Interacts with WIPI2. Interacts with ATP2A2. Interacts with AMBRA1. Interacts with Irgm1; promoting the coassembly of ULK1 and BECN1. Autophosphorylated. Phosphorylated under nutrient-rich conditions; dephosphorylated during starvation or following treatment with rapamycin. In response to nutrient limitation, phosphorylated and activated by AMPK, leading to activate autophagy. Under nutrient sufficiency, phosphorylated by MTOR/mTOR, disrupting the interaction with AMPK and preventing activation of ULK1. In terms of processing, ubiquitinated via 'Lys-63'-linkage by a complex composed of AMBRA1 and TRAF6 following autophagy induction, promoting ULK1 stability and kinase activity. Deubiquitinated by USP20; leading to ULK1 stability and autophagy initiation. Post-translationally, acetylated by KAT5/TIP60 under autophagy induction, promoting protein kinase activity.

The protein localises to the cytoplasm. It is found in the cytosol. Its subcellular location is the preautophagosomal structure. The enzyme catalyses L-seryl-[protein] + ATP = O-phospho-L-seryl-[protein] + ADP + H(+). It carries out the reaction L-threonyl-[protein] + ATP = O-phospho-L-threonyl-[protein] + ADP + H(+). Acetylation by KAT5/TIP60 stimulates the protein kinase activity. The protein kinase activity is activated by unanchored 'Lys-63'-linked polyubiquitin chains: unanchored 'Lys-63'-linked polyubiquitin chains are catalyzed by TRIM32 in an AMBRA1-dependent manner. In terms of biological role, serine/threonine-protein kinase involved in autophagy in response to starvation. Acts upstream of phosphatidylinositol 3-kinase PIK3C3 to regulate the formation of autophagophores, the precursors of autophagosomes. Part of regulatory feedback loops in autophagy: acts both as a downstream effector and negative regulator of mammalian target of rapamycin complex 1 (mTORC1) via interaction with RPTOR. Activated via phosphorylation by AMPK and also acts as a regulator of AMPK by mediating phosphorylation of AMPK subunits PRKAA1, PRKAB2 and PRKAG1, leading to negatively regulate AMPK activity. May phosphorylate ATG13/KIAA0652 and RPTOR; however such data need additional evidences. Plays a role early in neuronal differentiation and is required for granule cell axon formation. Also phosphorylates SESN2 and SQSTM1 to regulate autophagy. Phosphorylates FLCN, promoting autophagy. Phosphorylates AMBRA1 in response to autophagy induction, releasing AMBRA1 from the cytoskeletal docking site to induce autophagosome nucleation. Phosphorylates ATG4B, leading to inhibit autophagy by decreasing both proteolytic activation and delipidation activities of ATG4B. This chain is Serine/threonine-protein kinase ULK1 (Ulk1), found in Mus musculus (Mouse).